A 127-amino-acid polypeptide reads, in one-letter code: Small ribosomal subunit protein uS11 (127 aa).

The protein belongs to the universal ribosomal protein uS11 family. In terms of assembly, part of the 30S ribosomal subunit. Interacts with proteins S7 and S18. Binds to IF-3.

Located on the platform of the 30S subunit, it bridges several disparate RNA helices of the 16S rRNA. Forms part of the Shine-Dalgarno cleft in the 70S ribosome. This chain is Small ribosomal subunit protein uS11, found in Chlorobium phaeobacteroides (strain DSM 266 / SMG 266 / 2430).